A 237-amino-acid chain; its full sequence is Leucyl/phenylalanyl-tRNA--protein transferase (237 aa).

It belongs to the L/F-transferase family.

Its subcellular location is the cytoplasm. The enzyme catalyses N-terminal L-lysyl-[protein] + L-leucyl-tRNA(Leu) = N-terminal L-leucyl-L-lysyl-[protein] + tRNA(Leu) + H(+). The catalysed reaction is N-terminal L-arginyl-[protein] + L-leucyl-tRNA(Leu) = N-terminal L-leucyl-L-arginyl-[protein] + tRNA(Leu) + H(+). It carries out the reaction L-phenylalanyl-tRNA(Phe) + an N-terminal L-alpha-aminoacyl-[protein] = an N-terminal L-phenylalanyl-L-alpha-aminoacyl-[protein] + tRNA(Phe). Its function is as follows. Functions in the N-end rule pathway of protein degradation where it conjugates Leu, Phe and, less efficiently, Met from aminoacyl-tRNAs to the N-termini of proteins containing an N-terminal arginine or lysine. The protein is Leucyl/phenylalanyl-tRNA--protein transferase of Shewanella baltica (strain OS185).